We begin with the raw amino-acid sequence, 152 residues long: Regulatory protein RecX (152 aa).

This sequence belongs to the RecX family.

The protein resides in the cytoplasm. Functionally, modulates RecA activity. The protein is Regulatory protein RecX of Chromobacterium violaceum (strain ATCC 12472 / DSM 30191 / JCM 1249 / CCUG 213 / NBRC 12614 / NCIMB 9131 / NCTC 9757 / MK).